The following is a 485-amino-acid chain: D-alanine--D-alanyl carrier protein ligase (485 aa).

144-145 (TS) is a binding site for ATP. Position 189 (D189) interacts with D-alanine. Residue 284–289 (NTYGPT) participates in ATP binding. V293 is a D-alanine binding site. 2 residues coordinate ATP: D365 and K473. K473 provides a ligand contact to D-alanine.

This sequence belongs to the ATP-dependent AMP-binding enzyme family. DltA subfamily.

Its subcellular location is the cytoplasm. It catalyses the reaction holo-[D-alanyl-carrier protein] + D-alanine + ATP = D-alanyl-[D-alanyl-carrier protein] + AMP + diphosphate. It participates in cell wall biogenesis; lipoteichoic acid biosynthesis. Its function is as follows. Catalyzes the first step in the D-alanylation of lipoteichoic acid (LTA), the activation of D-alanine and its transfer onto the D-alanyl carrier protein (Dcp) DltC. In an ATP-dependent two-step reaction, forms a high energy D-alanyl-AMP intermediate, followed by transfer of the D-alanyl residue as a thiol ester to the phosphopantheinyl prosthetic group of the Dcp. D-alanylation of LTA plays an important role in modulating the properties of the cell wall in Gram-positive bacteria, influencing the net charge of the cell wall. The polypeptide is D-alanine--D-alanyl carrier protein ligase (Staphylococcus aureus (strain bovine RF122 / ET3-1)).